Reading from the N-terminus, the 629-residue chain is tRNA uridine 5-carboxymethylaminomethyl modification enzyme MnmG (629 aa).

FAD-binding positions include 13 to 18 (GGGHAG), Val125, and Ser180. Residue 273–287 (GPRYCPSIEDKVMRF) participates in NAD(+) binding. An FAD-binding site is contributed by Gln370.

The protein belongs to the MnmG family. As to quaternary structure, homodimer. Heterotetramer of two MnmE and two MnmG subunits. FAD is required as a cofactor.

It is found in the cytoplasm. NAD-binding protein involved in the addition of a carboxymethylaminomethyl (cmnm) group at the wobble position (U34) of certain tRNAs, forming tRNA-cmnm(5)s(2)U34. The sequence is that of tRNA uridine 5-carboxymethylaminomethyl modification enzyme MnmG from Serratia proteamaculans (strain 568).